The chain runs to 133 residues: Male-specific protein scotti (133 aa).

A disordered region spans residues 11-57 (FPSNGLGNNNNDPNQQRGERPRQPHPDLGWILDAPNEPPRNRNPLLY). The segment covering 14-24 (NGLGNNNNDPN) has biased composition (low complexity). A glycan (N-linked (GlcNAc...) asparagine) is linked at N83.

It belongs to the male-specific scotti family.

In terms of biological role, post-meiotically transcribed gene that has a role in late spermiogenesis; required for actin cone progression during spermatid individualization. The protein is Male-specific protein scotti of Drosophila persimilis (Fruit fly).